Reading from the N-terminus, the 577-residue chain is MTELAGASSSCCHRPAGRGAMQSVLHHFQRLRGREGGSHFINTSSPRGEAKMSITSDEVNFLVYRYLQESGFSHSAFTFGIESHISQSNINGTLVPPAALISILQKGLQYVEAEISINEDGTVFDGRPIESLSLIDAVMPDVVQTRQQAFREKLAQQQASAAAAAAAATAAATAATTTSAGVSHQNPSKNREATVNGEENRAHSVNNHAKPMEIDGEVEIPSSKATVLRGHESEVFICAWNPVSDLLASGSGDSTARIWNLNENSNGGSTQLVLRHCIREGGHDVPSNKDVTSLDWNTNGTLLATGSYDGFARIWTEDGNLASTLGQHKGPIFALKWNRKGNYILSAGVDKTTIIWDAHTGEAKQQFPFHSAPALDVDWQNNTTFASCSTDMCIHVCRLGCDRPVKTFQGHTNEVNAIKWDPSGMLLASCSDDMTLKIWSMKQEVCIHDLQAHNKEIYTIKWSPTGPATSNPNSNIMLASASFDSTVRLWDIERGVCTHTLTKHQEPVYSVAFSPDGKYLASGSFDKCVHIWNTQSGNLVHSYRGTGGIFEVCWNARGDKVGASASDGSVCVLDLRK.

One can recognise a LisH domain in the interval 55-87; that stretch reads TSDEVNFLVYRYLQESGFSHSAFTFGIESHISQ. Positions 92 to 137 constitute an F-box-like domain; that stretch reads GTLVPPAALISILQKGLQYVEAEISINEDGTVFDGRPIESLSLIDA. K153 carries the N6-acetyllysine modification. Positions 177–202 are disordered; the sequence is TTSAGVSHQNPSKNREATVNGEENRA. Position 183 is a phosphoserine (S183). WD repeat units lie at residues 230–269, 286–325, 327–366, 369–409, 410–449, 452–500, 503–542, and 544–576; these read GHESEVFICAWNPVSDLLASGSGDSTARIWNLNENSNGGS, PSNKDVTSLDWNTNGTLLATGSYDGFARIWTEDGNLASTL, QHKGPIFALKWNRKGNYILSAGVDKTTIIWDAHTGEAKQQ, FHSA…KTFQ, GHTNEVNAIKWDPSGMLLASCSDDMTLKIWSMKQEVCIHD, AHNK…CTHT, KHQEPVYSVAFSPDGKYLASGSFDKCVHIWNTQSGNLVHS, and RGTGGIFEVCWNARGDKVGASASDGSVCVLDLR. K340 is covalently cross-linked (Glycyl lysine isopeptide (Lys-Gly) (interchain with G-Cter in SUMO2)).

This sequence belongs to the WD repeat EBI family. Homotetramer; dimer of dimers. Component of the N-Cor repressor complex, at least composed of NCOR1, NCOR2, HDAC3, TBL1X, TBL1R, CORO2A and GPS2. Interacts with GPS2 (when sumoylated); leading to protect GPS2 against degradation by the proteasome. Component of a E3 ubiquitin ligase complex containing UBE2D1, SIAH1, CACYBP/SIP, SKP1, APC and TBL1X. Probably part of other corepressor complexes, that do not contain NCOR1 and NCOR2. Interacts with histones H2B, H3a and H4. Interacts with MECP2; recruits TBL1X to the heterochromatin foci. Interacts with USP44. In terms of tissue distribution, ubiquitous.

It is found in the nucleus. In terms of biological role, F-box-like protein involved in the recruitment of the ubiquitin/19S proteasome complex to nuclear receptor-regulated transcription units. Plays an essential role in transcription activation mediated by nuclear receptors. Probably acts as integral component of corepressor complexes that mediates the recruitment of the 19S proteasome complex, leading to the subsequent proteasomal degradation of transcription repressor complexes, thereby allowing cofactor exchange. The chain is F-box-like/WD repeat-containing protein TBL1X (TBL1X) from Homo sapiens (Human).